Here is a 477-residue protein sequence, read N- to C-terminus: Histidine--tRNA ligase (477 aa).

Belongs to the class-II aminoacyl-tRNA synthetase family. As to quaternary structure, homodimer.

Its subcellular location is the cytoplasm. The enzyme catalyses tRNA(His) + L-histidine + ATP = L-histidyl-tRNA(His) + AMP + diphosphate + H(+). The protein is Histidine--tRNA ligase (hisS) of Xanthomonas campestris pv. campestris (strain ATCC 33913 / DSM 3586 / NCPPB 528 / LMG 568 / P 25).